Here is a 245-residue protein sequence, read N- to C-terminus: 1-(5-phosphoribosyl)-5-[(5-phosphoribosylamino)methylideneamino] imidazole-4-carboxamide isomerase (245 aa).

The active-site Proton acceptor is Asp8. The active-site Proton donor is the Asp131.

This sequence belongs to the HisA/HisF family.

Its subcellular location is the cytoplasm. The enzyme catalyses 1-(5-phospho-beta-D-ribosyl)-5-[(5-phospho-beta-D-ribosylamino)methylideneamino]imidazole-4-carboxamide = 5-[(5-phospho-1-deoxy-D-ribulos-1-ylimino)methylamino]-1-(5-phospho-beta-D-ribosyl)imidazole-4-carboxamide. It participates in amino-acid biosynthesis; L-histidine biosynthesis; L-histidine from 5-phospho-alpha-D-ribose 1-diphosphate: step 4/9. This Neisseria gonorrhoeae (strain NCCP11945) protein is 1-(5-phosphoribosyl)-5-[(5-phosphoribosylamino)methylideneamino] imidazole-4-carboxamide isomerase.